Reading from the N-terminus, the 133-residue chain is Small ribosomal subunit protein uS8 (133 aa).

It belongs to the universal ribosomal protein uS8 family. Part of the 30S ribosomal subunit. Contacts proteins S5 and S12.

In terms of biological role, one of the primary rRNA binding proteins, it binds directly to 16S rRNA central domain where it helps coordinate assembly of the platform of the 30S subunit. The polypeptide is Small ribosomal subunit protein uS8 (Prochlorococcus marinus (strain MIT 9301)).